Consider the following 1348-residue polypeptide: Phosphoribosylformylglycinamidine synthase (1348 aa).

ATP contacts are provided by residues 300 to 311 (GAATGAGGEIRD) and Ala-701. Residues Asp-702, Glu-741, Asn-745, and Asp-941 each coordinate Mg(2+). Ser-943 provides a ligand contact to ATP. The Glutamine amidotransferase type-1 domain occupies 1099–1348 (VAILREQGVN…MFRNARVWCG (250 aa)). Cys-1192 serves as the catalytic Nucleophile. Residues His-1313 and Glu-1315 contribute to the active site.

It in the N-terminal section; belongs to the FGAMS family. In terms of assembly, monomer.

The protein localises to the cytoplasm. It catalyses the reaction N(2)-formyl-N(1)-(5-phospho-beta-D-ribosyl)glycinamide + L-glutamine + ATP + H2O = 2-formamido-N(1)-(5-O-phospho-beta-D-ribosyl)acetamidine + L-glutamate + ADP + phosphate + H(+). The protein operates within purine metabolism; IMP biosynthesis via de novo pathway; 5-amino-1-(5-phospho-D-ribosyl)imidazole from N(2)-formyl-N(1)-(5-phospho-D-ribosyl)glycinamide: step 1/2. Phosphoribosylformylglycinamidine synthase involved in the purines biosynthetic pathway. Catalyzes the ATP-dependent conversion of formylglycinamide ribonucleotide (FGAR) and glutamine to yield formylglycinamidine ribonucleotide (FGAM) and glutamate. The protein is Phosphoribosylformylglycinamidine synthase of Xanthomonas axonopodis pv. citri (strain 306).